The primary structure comprises 367 residues: Molybdopterin synthase catalytic subunit (367 aa).

Substrate-binding positions include 101–102 (HR), lysine 117, and 124–126 (KKE). The segment at 326–345 (HFTKREPSSMEAAPPKKIRK) is disordered.

It belongs to the MoaE family. MOCS2B subfamily. In terms of assembly, heterotetramer; composed of 2 small (Mocs2A) and 2 large (Mocs2B) subunits.

It is found in the cytoplasm. The enzyme catalyses 2 [molybdopterin-synthase sulfur-carrier protein]-C-terminal-Gly-aminoethanethioate + cyclic pyranopterin phosphate + H2O = molybdopterin + 2 [molybdopterin-synthase sulfur-carrier protein]-C-terminal Gly-Gly + 2 H(+). Its pathway is cofactor biosynthesis; molybdopterin biosynthesis. Its function is as follows. Catalytic subunit of the molybdopterin synthase complex, a complex that catalyzes the conversion of precursor Z into molybdopterin. Acts by mediating the incorporation of 2 sulfur atoms from thiocarboxylated Mocs2A into precursor Z to generate a dithiolene group. The polypeptide is Molybdopterin synthase catalytic subunit (Drosophila sechellia (Fruit fly)).